We begin with the raw amino-acid sequence, 111 residues long: UPF0145 protein BRADO6695 (111 aa).

This sequence belongs to the UPF0145 family.

This Bradyrhizobium sp. (strain ORS 278) protein is UPF0145 protein BRADO6695.